We begin with the raw amino-acid sequence, 108 residues long: SPbeta prophage-derived uncharacterized HTH-type transcriptional regulator YonR (108 aa).

Residues 6–60 form the HTH cro/C1-type domain; sequence LKKCRTSKGYSQQRMADFLGITRQGYGKYEIGKAEPDLKTLTKLSNILGVSTDFL. Positions 17-36 form a DNA-binding region, H-T-H motif; that stretch reads QQRMADFLGITRQGYGKYEI.

This chain is SPbeta prophage-derived uncharacterized HTH-type transcriptional regulator YonR (yonR), found in Bacillus subtilis (strain 168).